Here is a 353-residue protein sequence, read N- to C-terminus: Protein RecA (353 aa).

67–74 (GPESSGKT) provides a ligand contact to ATP.

This sequence belongs to the RecA family.

The protein localises to the cytoplasm. Its function is as follows. Can catalyze the hydrolysis of ATP in the presence of single-stranded DNA, the ATP-dependent uptake of single-stranded DNA by duplex DNA, and the ATP-dependent hybridization of homologous single-stranded DNAs. It interacts with LexA causing its activation and leading to its autocatalytic cleavage. This chain is Protein RecA, found in Chlamydia pneumoniae (Chlamydophila pneumoniae).